The primary structure comprises 527 residues: MLMLFVFGVLLHEVSLSGQNEAPPNTHSIPGEPLYNYASIRLPEEHIPFFLHNNRHIATVCRKDSLCPYKKHLEKLKYCWGYEKSCKPEFRFGYPVCSYVDMGWTDTLESAEDIFWKQADFGYARERLEEMHVLCQPKETSDSSLVCSRYLQYCRATNLYLDLRNIKRNHDRFMEDFFQSGEIGGHCKLDIRTLMSEGQRKSPLQSWFAELQSYTQLNFRPIEDAKCDIVIEKPTYFMKLDAGVNMYHHFCDFINLYITQHVNNSFSTDVYIVMWDTSSYGYGDLFSDTWNAFTDYDVIHLKTYDSKRVCFKEAVFSLLPRMRYGLFYNTPLISGCQNTGLFRAFAQHVLHRLNITQEGPKDGKIRVTILARSTEYRKILNQNELVNALKTVSTFEVQIVDYKYRELGFLDQLRITHNTDIFIGMHGAGLTHLLFLPDWAAVFELYNCEDERCYLDLARLRGVHYITWRRQNKVFPQDKGHHPTLGEHPKFTNYSFDVEEFMYLVLQAADHVLQHPKWPFKKKHDEL.

An N-terminal signal peptide occupies residues 1-17; sequence MLMLFVFGVLLHEVSLS. The Required for optimal activity motif lies at 295 to 297; that stretch reads DYD. An N-linked (GlcNAc...) asparagine glycan is attached at N354. Positions 524–527 match the Prevents secretion from ER motif; that stretch reads HDEL.

Belongs to the glycosyltransferase 61 family.

Its subcellular location is the endoplasmic reticulum lumen. It carries out the reaction L-seryl-[protein] + UDP-N-acetyl-alpha-D-glucosamine = 3-O-(N-acetyl-beta-D-glucosaminyl)-L-seryl-[protein] + UDP + H(+). It catalyses the reaction L-threonyl-[protein] + UDP-N-acetyl-alpha-D-glucosamine = 3-O-(N-acetyl-beta-D-glucosaminyl)-L-threonyl-[protein] + UDP + H(+). Its function is as follows. Catalyzes the transfer of a single N-acetylglucosamine from UDP-GlcNAc to a serine or threonine residue in extracellular proteins resulting in their modification with a beta-linked N-acetylglucosamine (O-GlcNAc). Specifically glycosylates the Thr residue located between the fifth and sixth conserved cysteines of folded EGF-like domains. In Pan troglodytes (Chimpanzee), this protein is EGF domain-specific O-linked N-acetylglucosamine transferase (EOGT).